The following is a 206-amino-acid chain: Ribonuclease HII (206 aa).

The region spanning alanine 14–proline 206 is the RNase H type-2 domain. A divalent metal cation is bound by residues aspartate 20, glutamate 21, and aspartate 117.

The protein belongs to the RNase HII family. It depends on Mn(2+) as a cofactor. Requires Mg(2+) as cofactor.

It is found in the cytoplasm. The enzyme catalyses Endonucleolytic cleavage to 5'-phosphomonoester.. In terms of biological role, endonuclease that specifically degrades the RNA of RNA-DNA hybrids. The chain is Ribonuclease HII from Pelodictyon phaeoclathratiforme (strain DSM 5477 / BU-1).